The chain runs to 394 residues: Protein NDRG1 (394 aa).

An N-acetylserine modification is found at S2. Phosphoserine occurs at positions 2, 319, and 326. Positions 325-394 (RSRTASGSSV…AGPKSMEVSC (70 aa)) are disordered. Polar residues predominate over residues 327 to 339 (RTASGSSVTSLDG). Residue T328 is modified to Phosphothreonine; by SGK1. A phosphoserine; by SGK1 mark is found at S330 and S332. S333 is modified (phosphoserine). T335 is modified (phosphothreonine). Position 336 is a phosphoserine (S336). A run of 3 repeats spans residues 339 to 348 (GTRSRSHTSE), 349 to 358 (GTRSRSHTSE), and 359 to 368 (GTRSRSHTSE). The segment at 339–368 (GTRSRSHTSEGTRSRSHTSEGTRSRSHTSE) is 3 X 10 AA tandem repeats of G-T-R-S-R-S-H-T-S-E. At T340 the chain carries Phosphothreonine. The residue at position 342 (S342) is a Phosphoserine. Over residues 345 to 371 (HTSEGTRSRSHTSEGTRSRSHTSEGAH) the composition is skewed to basic and acidic residues. At T346 the chain carries Phosphothreonine; by SGK1. Residue S352 is modified to Phosphoserine. T356 carries the phosphothreonine; by SGK1 modification. The residue at position 362 (S362) is a Phosphoserine. At S364 the chain carries Phosphoserine; by SGK1. At T366 the chain carries Phosphothreonine; by SGK1. T375 carries the post-translational modification Phosphothreonine.

It belongs to the NDRG family. Interacts with RAB4A (membrane-bound form); the interaction involves NDRG1 in vesicular recycling of CDH1. Post-translationally, under stress conditions, phosphorylated in the C-terminal on many serine and threonine residues. Phosphorylated in vitro by PKA. Phosphorylation enhanced by increased intracellular cAMP levels. Homocysteine induces dephosphorylation. Phosphorylation by SGK1 is cell cycle dependent. Ubiquitous; expressed most prominently in placental membranes and prostate, kidney, small intestine, and ovary tissues. Also expressed in heart, brain, skeletal muscle, lung, liver and pancreas. Low levels in peripheral blood leukocytes and in tissues of the immune system. Expressed mainly in epithelial cells. Also found in Schwann cells of peripheral neurons. Reduced expression in adenocarcinomas compared to normal tissues. In colon, prostate and placental membranes, the cells that border the lumen show the highest expression.

Its subcellular location is the cytoplasm. It localises to the cytosol. It is found in the cytoskeleton. The protein resides in the microtubule organizing center. The protein localises to the centrosome. Its subcellular location is the nucleus. It localises to the cell membrane. Its function is as follows. Stress-responsive protein involved in hormone responses, cell growth, and differentiation. Acts as a tumor suppressor in many cell types. Necessary but not sufficient for p53/TP53-mediated caspase activation and apoptosis. Has a role in cell trafficking, notably of the Schwann cell, and is necessary for the maintenance and development of the peripheral nerve myelin sheath. Required for vesicular recycling of CDH1 and TF. May also function in lipid trafficking. Protects cells from spindle disruption damage. Functions in p53/TP53-dependent mitotic spindle checkpoint. Regulates microtubule dynamics and maintains euploidy. This chain is Protein NDRG1 (NDRG1), found in Homo sapiens (Human).